A 236-amino-acid chain; its full sequence is Ribosome assembly factor MRT4 (236 aa).

The protein belongs to the universal ribosomal protein uL10 family. In terms of assembly, associates with the pre-60S ribosomal particle.

Its subcellular location is the nucleus. It is found in the nucleolus. The protein localises to the cytoplasm. Its function is as follows. Component of the ribosome assembly machinery. Nuclear paralog of the ribosomal protein P0, it binds pre-60S subunits at an early stage of assembly in the nucleolus, and is replaced by P0 in cytoplasmic pre-60S subunits and mature 80S ribosomes. The protein is Ribosome assembly factor MRT4 of Saccharomyces cerevisiae (strain ATCC 204508 / S288c) (Baker's yeast).